Consider the following 565-residue polypeptide: NAD-dependent malic enzyme (565 aa).

The Proton donor role is filled by Tyr104. Arg157 is a binding site for NAD(+). The active-site Proton acceptor is Lys175. The a divalent metal cation site is built by Glu246, Asp247, and Asp270. Asp270 and Asn418 together coordinate NAD(+).

This sequence belongs to the malic enzymes family. As to quaternary structure, homotetramer. It depends on Mg(2+) as a cofactor. Requires Mn(2+) as cofactor.

The enzyme catalyses (S)-malate + NAD(+) = pyruvate + CO2 + NADH. It carries out the reaction oxaloacetate + H(+) = pyruvate + CO2. This is NAD-dependent malic enzyme from Escherichia coli O139:H28 (strain E24377A / ETEC).